The sequence spans 474 residues: PTS system MurNAc-GlcNAc-specific EIIBC component (474 aa).

The PTS EIIB type-1 domain maps to 5 to 87; the sequence is ERLAKDITHA…ADQSGATLAE (83 aa). Catalysis depends on Cys27, which acts as the Phosphocysteine intermediate; for EIIB activity. Positions 124–474 constitute a PTS EIIC type-1 domain; the sequence is KSIANIFIPL…GTTKEMRNPE (351 aa). The next 10 helical transmembrane spans lie at 129–149, 167–187, 193–213, 228–248, 268–288, 299–319, 343–363, 378–398, 402–422, and 444–464; these read IFIP…IAAI, IVTV…IFTG, VFGA…LTGI, LAAG…LSMV, ITLL…AGFV, IIGV…LPLV, LLPI…ALWV, ALPV…TLPL, FFTA…IGHI, and LGYI…TYFF.

The protein localises to the cell membrane. It carries out the reaction N-acetyl-beta-D-muramate-(1-&gt;4)-N-acetyl-D-glucosamine(out) + N(pros)-phospho-L-histidyl-[protein] = 6-phospho-N-acetyl-beta-D-muramate-(1-&gt;4)-N-acetyl-D-glucosamine(in) + L-histidyl-[protein]. Its pathway is cell wall biogenesis; peptidoglycan recycling. Its function is as follows. The phosphoenolpyruvate-dependent sugar phosphotransferase system (sugar PTS), a major carbohydrate active transport system, catalyzes the phosphorylation of incoming sugar substrates concomitantly with their translocation across the cell membrane. This system is involved in the uptake and phosphorylation of MurNAc-GlcNAc, the principle peptidoglycan turnover product of S.aureus, yielding cytoplasmic MurNAc 6P-GlcNAc. In Staphylococcus epidermidis (strain ATCC 35984 / DSM 28319 / BCRC 17069 / CCUG 31568 / BM 3577 / RP62A), this protein is PTS system MurNAc-GlcNAc-specific EIIBC component.